The chain runs to 244 residues: Pyridoxal phosphate homeostasis protein (244 aa).

Lysine 37 is subject to N6-(pyridoxal phosphate)lysine.

The protein belongs to the pyridoxal phosphate-binding protein YggS/PROSC family.

Functionally, pyridoxal 5'-phosphate (PLP)-binding protein, which may be involved in intracellular homeostatic regulation of pyridoxal 5'-phosphate (PLP), the active form of vitamin B6. The chain is Pyridoxal phosphate homeostasis protein from Caenorhabditis elegans.